A 96-amino-acid polypeptide reads, in one-letter code: MDGFGSDFSVGGSSSGKVDTGAIMEQVKVQIAVANAQELLQRMTDKCFRKCIGKPGGSLDNSEQKCVAMCMDRYMDAWNIVSRAYNSRLQRERAKM.

Residues 47 to 70 (CFRKCIGKPGGSLDNSEQKCVAMC) carry the Twin CX3C motif motif. 2 disulfide bridges follow: cysteine 47–cysteine 70 and cysteine 51–cysteine 66.

Belongs to the small Tim family. In terms of assembly, heterohexamer; composed of 3 copies of TIMM8 (TIMM8A or TIMM8B) and 3 copies of TIMM13, named soluble 70 kDa complex. Associates with the TIM22 complex, whose core is composed of TIMM22.

The protein localises to the mitochondrion inner membrane. In terms of biological role, mitochondrial intermembrane chaperone that participates in the import and insertion of some multi-pass transmembrane proteins into the mitochondrial inner membrane. Also required for the transfer of beta-barrel precursors from the TOM complex to the sorting and assembly machinery (SAM complex) of the outer membrane. Acts as a chaperone-like protein that protects the hydrophobic precursors from aggregation and guide them through the mitochondrial intermembrane space. The TIMM8-TIMM13 complex mediates the import of some proteins while the predominant TIMM9-TIMM10 70 kDa complex mediates the import of much more proteins. The sequence is that of Mitochondrial import inner membrane translocase subunit Tim13-B (timm13-b) from Xenopus laevis (African clawed frog).